An 863-amino-acid polypeptide reads, in one-letter code: DNA mismatch repair protein MutS (863 aa).

607 to 614 (GPNMAGKS) serves as a coordination point for ATP.

It belongs to the DNA mismatch repair MutS family.

Functionally, this protein is involved in the repair of mismatches in DNA. It is possible that it carries out the mismatch recognition step. This protein has a weak ATPase activity. The protein is DNA mismatch repair protein MutS of Caldicellulosiruptor bescii (strain ATCC BAA-1888 / DSM 6725 / KCTC 15123 / Z-1320) (Anaerocellum thermophilum).